The sequence spans 301 residues: Probable 5-dehydro-4-deoxyglucarate dehydratase (301 aa).

Belongs to the DapA family.

The enzyme catalyses 5-dehydro-4-deoxy-D-glucarate + H(+) = 2,5-dioxopentanoate + CO2 + H2O. It functions in the pathway carbohydrate acid metabolism; D-glucarate degradation; 2,5-dioxopentanoate from D-glucarate: step 2/2. The polypeptide is Probable 5-dehydro-4-deoxyglucarate dehydratase (Chelativorans sp. (strain BNC1)).